The primary structure comprises 309 residues: UPF0276 protein RB0508 (309 aa).

It belongs to the UPF0276 family.

The sequence is that of UPF0276 protein RB0508 from Rhizobium meliloti (strain 1021) (Ensifer meliloti).